The following is a 496-amino-acid chain: uncharacterized protein (496 aa).

The span at 118–129 (LDRPFIKPRREN) shows a compositional bias: basic and acidic residues. Residues 118-187 (LDRPFIKPRR…NPHQSNRNTS (70 aa)) form a disordered region. A compositionally biased stretch (polar residues) spans 151–187 (TSDSQYASPFENHSITNLPIGQKQPFNNPHQSNRNTS).

This is an uncharacterized protein from Acanthamoeba polyphaga mimivirus (APMV).